A 172-amino-acid chain; its full sequence is Bifunctional protein PyrR (172 aa).

A PRPP-binding motif is present at residues 93–105 (VILIDDVLYTGRT).

The protein belongs to the purine/pyrimidine phosphoribosyltransferase family. PyrR subfamily. Homodimer and homohexamer; in equilibrium.

The catalysed reaction is UMP + diphosphate = 5-phospho-alpha-D-ribose 1-diphosphate + uracil. Regulates transcriptional attenuation of the pyrimidine nucleotide (pyr) operon by binding in a uridine-dependent manner to specific sites on pyr mRNA. This disrupts an antiterminator hairpin in the RNA and favors formation of a downstream transcription terminator, leading to a reduced expression of downstream genes. In terms of biological role, also displays a weak uracil phosphoribosyltransferase activity which is not physiologically significant. The protein is Bifunctional protein PyrR of Streptococcus sanguinis (strain SK36).